The sequence spans 901 residues: HTH-type transcriptional regulator MalT (901 aa).

Residue 39-46 coordinates ATP; the sequence is SPAGYGKT. One can recognise an HTH luxR-type domain in the interval 829-894; that stretch reads ELIRTSPLTQ…DAVQHAQQLL (66 aa). Residues 853 to 872 constitute a DNA-binding region (H-T-H motif); it reads NEQIAGELAVAATTIKTHIR.

The protein belongs to the MalT family. As to quaternary structure, monomer in solution. Oligomerizes to an active state in the presence of the positive effectors ATP and maltotriose.

Its activity is regulated as follows. Activated by ATP and maltotriose, which are both required for DNA binding. Its function is as follows. Positively regulates the transcription of the maltose regulon whose gene products are responsible for uptake and catabolism of malto-oligosaccharides. Specifically binds to the promoter region of its target genes, recognizing a short DNA motif called the MalT box. The polypeptide is HTH-type transcriptional regulator MalT (Salmonella typhi).